Consider the following 36-residue polypeptide: Potassium channel toxin alpha-KTx 1.9 (36 aa).

This sequence belongs to the short scorpion toxin superfamily. Potassium channel inhibitor family. Alpha-KTx 01 subfamily. Expressed by the venom gland.

It is found in the secreted. Potent selective inhibitor of Kv1/KCNA voltage-gated potassium channels. This chain is Potassium channel toxin alpha-KTx 1.9, found in Centruroides limbatus (Bark scorpion).